Consider the following 356-residue polypeptide: Glutamine synthetase nodule isozyme (356 aa).

Residues 19–99 form the GS beta-grasp domain; it reads IIAEYIWVGG…VICDVYTPAG (81 aa). Residues 106-356 enclose the GS catalytic domain; the sequence is KRHNAAKIFS…IAETTLLWKP (251 aa).

The protein belongs to the glutamine synthetase family. As to quaternary structure, homooctamer. In terms of tissue distribution, found at highest levels in root nodules.

It is found in the cytoplasm. The catalysed reaction is L-glutamate + NH4(+) + ATP = L-glutamine + ADP + phosphate + H(+). This Medicago sativa (Alfalfa) protein is Glutamine synthetase nodule isozyme (GS1).